A 478-amino-acid chain; its full sequence is Cytochrome c-552 (478 aa).

A signal peptide spans 1 to 26 (MARKTLRARRFFSLIFPFFFITSVYA). Heme c is bound at residue His-94. Residues Cys-122, Cys-125, and Lys-126 each contribute to the heme site. 6 residues coordinate heme c: Cys-160, Cys-163, His-164, Cys-209, Cys-212, and His-213. 4 residues coordinate Ca(2+): Glu-215, Tyr-216, Lys-261, and Gln-263. Tyr-216 contributes to the substrate binding site. A substrate-binding site is contributed by His-264. Positions 275, 282, 285, 286, 301, 314, 317, 318, and 393 each coordinate heme c.

It belongs to the cytochrome c-552 family. It depends on Ca(2+) as a cofactor. The cofactor is heme c.

Its subcellular location is the periplasm. It carries out the reaction 6 Fe(III)-[cytochrome c] + NH4(+) + 2 H2O = 6 Fe(II)-[cytochrome c] + nitrite + 8 H(+). It functions in the pathway nitrogen metabolism; nitrate reduction (assimilation). In terms of biological role, catalyzes the reduction of nitrite to ammonia, consuming six electrons in the process. The polypeptide is Cytochrome c-552 (Salmonella agona (strain SL483)).